The sequence spans 274 residues: Beta-lysine N(6)-acetyltransferase (274 aa).

One can recognise an N-acetyltransferase domain in the interval 123-274 (FHLKIANETD…DMNFWYKLSE (152 aa)).

Belongs to the acetyltransferase family.

The catalysed reaction is (3S)-3,6-diaminohexanoate + acetyl-CoA = (3S)-6-acetamido-3-aminohexanoate + CoA + H(+). Functionally, catalyzes the acetylation of beta-lysine to N6-acetyl-beta-lysine, a compatible solute produced by methanogenic archaea that helps cells to cope with salt stress. The protein is Beta-lysine N(6)-acetyltransferase of Methanococcus maripaludis (strain DSM 14266 / JCM 13030 / NBRC 101832 / S2 / LL).